Consider the following 191-residue polypeptide: MQLWVGLGNPGPQYALHRHNVGFMALDTIAEVHNFGPVQKKFQGWLQEGRIGTEKVLLLKPATFMNESGRSVGEAMRFYKLGMDALVVFHDELDLAPFKVKVKQGGGTAGHNGLRSIDKHLGPDFLRVRLGIGHPGHKDRVTGHVLGNFAKSEQDDLVDMLGAIASEAALLAKGDNVLFMNNIALRQQTAG.

Tyrosine 14 lines the tRNA pocket. Histidine 19 functions as the Proton acceptor in the catalytic mechanism. The tRNA site is built by phenylalanine 64, asparagine 66, and asparagine 112.

The protein belongs to the PTH family. As to quaternary structure, monomer.

It is found in the cytoplasm. It carries out the reaction an N-acyl-L-alpha-aminoacyl-tRNA + H2O = an N-acyl-L-amino acid + a tRNA + H(+). In terms of biological role, hydrolyzes ribosome-free peptidyl-tRNAs (with 1 or more amino acids incorporated), which drop off the ribosome during protein synthesis, or as a result of ribosome stalling. Functionally, catalyzes the release of premature peptidyl moieties from peptidyl-tRNA molecules trapped in stalled 50S ribosomal subunits, and thus maintains levels of free tRNAs and 50S ribosomes. This is Peptidyl-tRNA hydrolase from Novosphingobium aromaticivorans (strain ATCC 700278 / DSM 12444 / CCUG 56034 / CIP 105152 / NBRC 16084 / F199).